A 279-amino-acid polypeptide reads, in one-letter code: GDT1-like protein 3 (279 aa).

A signal peptide spans Met1 to Ala23. A run of 6 helical transmembrane segments spans residues Val64–Ile84, Ile103–Gly123, Thr135–Trp155, Phe186–Glu206, Ala224–Ile244, and Val258–Pro278.

The protein belongs to the GDT1 family.

It is found in the membrane. The chain is GDT1-like protein 3 from Oryza sativa subsp. japonica (Rice).